Here is a 468-residue protein sequence, read N- to C-terminus: Immunoglobulin superfamily member 21 (468 aa).

Positions 1–24 are cleaved as a signal peptide; sequence MQAAPSLRRASCLLLAAILDLARG. Positions 25–132 constitute an Ig-like 1 domain; the sequence is YLTVNIEPLP…RATREKVVLA (108 aa). Cys-46 and Cys-116 form a disulfide bridge. N-linked (GlcNAc...) asparagine glycosylation is found at Asn-82, Asn-165, and Asn-407. The region spanning 344-429 is the Ig-like 2 domain; sequence PKIMMTPSRA…GSTDTHTRLI (86 aa).

Interacts (Ig-like 1 domain) with NRXN2 (via Laminin G-like 1 domain) in a trans-interaction manner. Expressed in brain (at protein levels). Highly expressed in the pyramidal cell layer of the dorsal and ventral hippocampal CA1 and CA3 regions, layers 5 and 6 of the cortex, the thalamus and the pons and weakly expressed in the cerebellum. Expressed in neurons but not in glia.

The protein localises to the postsynaptic cell membrane. Its function is as follows. Involved in synaptic inhibition in the brain. Selectively regulates inhibitory presynaptic differentiation through interacting with presynaptic NRXN2. The chain is Immunoglobulin superfamily member 21 (Igsf21) from Mus musculus (Mouse).